The primary structure comprises 707 residues: Leucine-rich repeat neuronal protein 3 (707 aa).

An N-terminal signal peptide occupies residues 1–22; it reads MKDTPLQVHVLLGLAITTLVQA. An LRRNT domain is found at 23 to 69; sequence IDKKVDCPQLCTCEIRPWFTPRSIYMEASTVDCNDLGLLNFPARLPA. At 23-626 the chain is on the extracellular side; the sequence is IDKKVDCPQL…DGKEYGKNHT (604 aa). LRR repeat units follow at residues 70-91, 93-114, 117-138, 141-162, 165-186, 189-210, 213-234, 237-258, 261-282, 285-304, 310-332, and 335-358; these read DTQI…TDFP, NLTG…NVQK, QLLS…CLYG, NLQE…AFIG, NLLR…WFDA, NLEI…NFQP, KLRS…ALAG, NLES…ALQK, NLKF…DFSN, HLKE…DSLA, DLRK…AFFR, and KLES…ESLP. Asparagine 93 and asparagine 103 each carry an N-linked (GlcNAc...) asparagine glycan. N-linked (GlcNAc...) asparagine glycosylation occurs at asparagine 223. The 54-residue stretch at 368–421 folds into the LRRCT domain; the sequence is NPIRCDCVIRWINMNKTNIRFMEPDSLFCVDPPEFQGQNVRQVHFRDMMEICLP. A glycan (N-linked (GlcNAc...) asparagine) is linked at asparagine 382. Positions 421–514 constitute an Ig-like C2-type domain; sequence PLIAPESFPS…DLKSIMIKVG (94 aa). Cysteine 444 and cysteine 496 are disulfide-bonded. Residues asparagine 522, asparagine 579, asparagine 608, and asparagine 624 are each glycosylated (N-linked (GlcNAc...) asparagine). Positions 523-614 constitute a Fibronectin type-III domain; the sequence is GSLNIKIRDI…QCVNVTTKSL (92 aa). Residues 627–647 traverse the membrane as a helical segment; sequence VFVACVGGLLGIIGVMCLFSC. Residues 648–707 lie on the Cytoplasmic side of the membrane; it reads VSQEGSSEGEHSYAVNHCHKPALAFSELYPPLINLWESSKEKRATLEVKATAIGVPTNMS.

As to expression, expressed in the brain, in Stronger expression in the ventricular zone and anlage of thalamus, spinal cord, and dorsal root ganglion in 11-17 dpc cerebellum and cerebral cortex in adults.

It is found in the membrane. The polypeptide is Leucine-rich repeat neuronal protein 3 (Lrrn3) (Mus musculus (Mouse)).